Here is a 504-residue protein sequence, read N- to C-terminus: uncharacterized protein (504 aa).

A propeptide spanning residues 1–212 is cleaved from the precursor; sequence MFMKSKAAGS…LYKTQDPVLD (212 aa).

This is an uncharacterized protein from Deinococcus radiodurans (strain ATCC 13939 / DSM 20539 / JCM 16871 / CCUG 27074 / LMG 4051 / NBRC 15346 / NCIMB 9279 / VKM B-1422 / R1).